Reading from the N-terminus, the 589-residue chain is Serine/threonine-protein kinase STE7 homolog (589 aa).

Residues 1-18 (MTRTTRIDTQEATKHKDL) show a composition bias toward basic and acidic residues. 2 disordered regions span residues 1–162 (MTRT…DPDN) and 185–233 (RQHY…ASSQ). Over residues 24–33 (PLSLSSNPNP) the composition is skewed to low complexity. Over residues 57 to 69 (VKSTSGSLRSSDM) the composition is skewed to polar residues. The span at 92–121 (PTASSSATSTPTSNITGSSSASSIQFAQKS) shows a compositional bias: low complexity. 2 stretches are compositionally biased toward polar residues: residues 127-136 (IVSQTLSRPS) and 144-162 (SGYS…DPDN). The span at 185–203 (RQHYQNSHHHLPTTNRKRQ) shows a compositional bias: basic residues. Over residues 206-220 (ISSISPTKSSAASSS) the composition is skewed to low complexity. Polar residues predominate over residues 221–233 (LEPQIQSLPASSQ). Residues 249-565 (LLTLKQLGSG…QLLEDKEHFF (317 aa)) form the Protein kinase domain. Residues 255 to 263 (LGSGNSGSV) and K278 contribute to the ATP site. The active-site Proton acceptor is the D374. The residue at position 402 (S402) is a Phosphoserine. The residue at position 408 (T408) is a Phosphothreonine. Residues 473 to 499 (IAAERNGQNSPSRSRKNKQKGNGYNSY) are disordered.

The protein belongs to the protein kinase superfamily. STE Ser/Thr protein kinase family. MAP kinase kinase subfamily.

It catalyses the reaction L-seryl-[protein] + ATP = O-phospho-L-seryl-[protein] + ADP + H(+). The enzyme catalyses L-threonyl-[protein] + ATP = O-phospho-L-threonyl-[protein] + ADP + H(+). The catalysed reaction is L-tyrosyl-[protein] + ATP = O-phospho-L-tyrosyl-[protein] + ADP + H(+). The polypeptide is Serine/threonine-protein kinase STE7 homolog (HST7) (Candida albicans (strain SC5314 / ATCC MYA-2876) (Yeast)).